Here is a 252-residue protein sequence, read N- to C-terminus: Imidazole glycerol phosphate synthase subunit HisF (252 aa).

Residues aspartate 11 and aspartate 130 contribute to the active site.

This sequence belongs to the HisA/HisF family. In terms of assembly, heterodimer of HisH and HisF.

The protein localises to the cytoplasm. The catalysed reaction is 5-[(5-phospho-1-deoxy-D-ribulos-1-ylimino)methylamino]-1-(5-phospho-beta-D-ribosyl)imidazole-4-carboxamide + L-glutamine = D-erythro-1-(imidazol-4-yl)glycerol 3-phosphate + 5-amino-1-(5-phospho-beta-D-ribosyl)imidazole-4-carboxamide + L-glutamate + H(+). It participates in amino-acid biosynthesis; L-histidine biosynthesis; L-histidine from 5-phospho-alpha-D-ribose 1-diphosphate: step 5/9. Its function is as follows. IGPS catalyzes the conversion of PRFAR and glutamine to IGP, AICAR and glutamate. The HisF subunit catalyzes the cyclization activity that produces IGP and AICAR from PRFAR using the ammonia provided by the HisH subunit. This is Imidazole glycerol phosphate synthase subunit HisF from Bacillus cytotoxicus (strain DSM 22905 / CIP 110041 / 391-98 / NVH 391-98).